Here is a 206-residue protein sequence, read N- to C-terminus: Small ribosomal subunit protein uS4 (206 aa).

Residues 98 to 176 (RRLDNVVYRL…APKWLEANRE (79 aa)) enclose the S4 RNA-binding domain.

This sequence belongs to the universal ribosomal protein uS4 family. In terms of assembly, part of the 30S ribosomal subunit. Contacts protein S5. The interaction surface between S4 and S5 is involved in control of translational fidelity.

In terms of biological role, one of the primary rRNA binding proteins, it binds directly to 16S rRNA where it nucleates assembly of the body of the 30S subunit. Functionally, with S5 and S12 plays an important role in translational accuracy. This Gloeobacter violaceus (strain ATCC 29082 / PCC 7421) protein is Small ribosomal subunit protein uS4.